The primary structure comprises 126 residues: MNELPPQIQNQLAQIQQVQQQAQALMQQKAQVEMLLRETERAFEELQKTEEGAEVYKGAGELLIKAKREDVLKDLEEKKDNFDVRLKSLSRQEERLQSRFNQLQEQLKSALGKMQGQGPATGGRAE.

It belongs to the prefoldin subunit beta family. As to quaternary structure, heterohexamer of two alpha and four beta subunits.

It is found in the cytoplasm. Functionally, molecular chaperone capable of stabilizing a range of proteins. Seems to fulfill an ATP-independent, HSP70-like function in archaeal de novo protein folding. This is Prefoldin subunit beta from Methanocella arvoryzae (strain DSM 22066 / NBRC 105507 / MRE50).